Reading from the N-terminus, the 1420-residue chain is DNA-directed RNA polymerase subunit beta' (1420 aa).

Zn(2+) is bound by residues Cys71, Cys73, Cys86, and Cys89. Mg(2+)-binding residues include Asp461, Asp463, and Asp465. Zn(2+)-binding residues include Cys815, Cys889, Cys896, and Cys899.

The protein belongs to the RNA polymerase beta' chain family. The RNAP catalytic core consists of 2 alpha, 1 beta, 1 beta' and 1 omega subunit. When a sigma factor is associated with the core the holoenzyme is formed, which can initiate transcription. The cofactor is Mg(2+). Zn(2+) serves as cofactor.

The enzyme catalyses RNA(n) + a ribonucleoside 5'-triphosphate = RNA(n+1) + diphosphate. Functionally, DNA-dependent RNA polymerase catalyzes the transcription of DNA into RNA using the four ribonucleoside triphosphates as substrates. In Haemophilus ducreyi (strain 35000HP / ATCC 700724), this protein is DNA-directed RNA polymerase subunit beta'.